Reading from the N-terminus, the 298-residue chain is Ethylmalonyl-CoA decarboxylase (298 aa).

It belongs to the enoyl-CoA hydratase/isomerase family.

Its subcellular location is the cytoplasm. It is found in the cytosol. The enzyme catalyses (2S)-ethylmalonyl-CoA + H(+) = butanoyl-CoA + CO2. The catalysed reaction is (S)-methylmalonyl-CoA + H(+) = propanoyl-CoA + CO2. It catalyses the reaction (2R)-ethylmalonyl-CoA + H(+) = butanoyl-CoA + CO2. Its function is as follows. Decarboxylates ethylmalonyl-CoA, a potentially toxic metabolite, to form butyryl-CoA, suggesting it might be involved in metabolite proofreading. Acts preferentially on (S)-ethylmalonyl-CoA but also has some activity on the (R)-isomer. Also has methylmalonyl-CoA decarboxylase activity at lower level. The protein is Ethylmalonyl-CoA decarboxylase (ECHDC1) of Gallus gallus (Chicken).